Reading from the N-terminus, the 191-residue chain is UPF0312 protein Shewana3_1179 (191 aa).

Positions 1–22 are cleaved as a signal peptide; sequence MKKQLLAALIGGSLLAPMAASA.

It belongs to the UPF0312 family. Type 1 subfamily.

The protein resides in the periplasm. The protein is UPF0312 protein Shewana3_1179 of Shewanella sp. (strain ANA-3).